Here is a 445-residue protein sequence, read N- to C-terminus: Tubulin beta-5 chain (445 aa).

8 residues coordinate GTP: Gln11, Glu69, Ser138, Gly142, Thr143, Gly144, Asn204, and Asn226. Glu69 provides a ligand contact to Mg(2+). The tract at residues 420–445 is disordered; sequence AEYQQYQDATADDEYEEGEEEEEEAA. Positions 429–445 are enriched in acidic residues; that stretch reads TADDEYEEGEEEEEEAA.

Belongs to the tubulin family. In terms of assembly, dimer of alpha and beta chains. A typical microtubule is a hollow water-filled tube with an outer diameter of 25 nm and an inner diameter of 15 nM. Alpha-beta heterodimers associate head-to-tail to form protofilaments running lengthwise along the microtubule wall with the beta-tubulin subunit facing the microtubule plus end conferring a structural polarity. Microtubules usually have 13 protofilaments but different protofilament numbers can be found in some organisms and specialized cells. Mg(2+) is required as a cofactor.

The protein localises to the cytoplasm. It localises to the cytoskeleton. Functionally, tubulin is the major constituent of microtubules, a cylinder consisting of laterally associated linear protofilaments composed of alpha- and beta-tubulin heterodimers. Microtubules grow by the addition of GTP-tubulin dimers to the microtubule end, where a stabilizing cap forms. Below the cap, tubulin dimers are in GDP-bound state, owing to GTPase activity of alpha-tubulin. This chain is Tubulin beta-5 chain, found in Gossypium hirsutum (Upland cotton).